A 153-amino-acid chain; its full sequence is Myosin regulatory light chain (153 aa).

Residue Ala-1 is modified to Blocked amino end (Ala). 2 consecutive EF-hand domains span residues 15 to 50 and 81 to 116; these read KQIQ…LGRT and DSEE…MGNN. Ca(2+)-binding residues include Asp-28, Asp-30, Asp-32, and Asp-39.

Its function is as follows. In molluscan muscle, calcium regulation is associated with myosin rather than with actin. Muscle myosin contains two types of light chains: the catalytic light chain, essential for ATPase activity, and the regulatory light chain, a calcium-binding protein responsible for Ca(2+) dependent binding and Ca(2+) dependent Mg-ATPase activity. This chain is Myosin regulatory light chain, found in Patinopecten sp. (Scallop).